Consider the following 630-residue polypeptide: 1-deoxy-D-xylulose-5-phosphate synthase (630 aa).

Residues His87 and 128–130 (GHS) each bind thiamine diphosphate. Mg(2+) is bound at residue Asp159. Thiamine diphosphate is bound by residues 160–161 (GA), Asn188, Phe295, and Glu377. Position 188 (Asn188) interacts with Mg(2+).

This sequence belongs to the transketolase family. DXPS subfamily. Homodimer. Mg(2+) is required as a cofactor. It depends on thiamine diphosphate as a cofactor.

The catalysed reaction is D-glyceraldehyde 3-phosphate + pyruvate + H(+) = 1-deoxy-D-xylulose 5-phosphate + CO2. Its pathway is metabolic intermediate biosynthesis; 1-deoxy-D-xylulose 5-phosphate biosynthesis; 1-deoxy-D-xylulose 5-phosphate from D-glyceraldehyde 3-phosphate and pyruvate: step 1/1. Functionally, catalyzes the acyloin condensation reaction between C atoms 2 and 3 of pyruvate and glyceraldehyde 3-phosphate to yield 1-deoxy-D-xylulose-5-phosphate (DXP). The polypeptide is 1-deoxy-D-xylulose-5-phosphate synthase (Pseudomonas syringae pv. syringae (strain B728a)).